A 325-amino-acid chain; its full sequence is GMP reductase (325 aa).

Catalysis depends on cysteine 174, which acts as the Thioimidate intermediate. Residue 203–226 (IVADGGIRNNGDIAKSIRFGASMC) coordinates NADP(+).

Belongs to the IMPDH/GMPR family. GuaC type 2 subfamily.

It carries out the reaction IMP + NH4(+) + NADP(+) = GMP + NADPH + 2 H(+). Functionally, catalyzes the irreversible NADPH-dependent deamination of GMP to IMP. It functions in the conversion of nucleobase, nucleoside and nucleotide derivatives of G to A nucleotides, and in maintaining the intracellular balance of A and G nucleotides. The chain is GMP reductase from Ligilactobacillus salivarius (strain UCC118) (Lactobacillus salivarius).